Reading from the N-terminus, the 317-residue chain is Acetyl-coenzyme A carboxylase carboxyl transferase subunit alpha (317 aa).

A CoA carboxyltransferase C-terminal domain is found at 37–292 (EINKKLEQTK…ADYITKGYNE (256 aa)).

The protein belongs to the AccA family. As to quaternary structure, acetyl-CoA carboxylase is a heterohexamer composed of biotin carboxyl carrier protein (AccB), biotin carboxylase (AccC) and two subunits each of ACCase subunit alpha (AccA) and ACCase subunit beta (AccD).

Its subcellular location is the cytoplasm. It catalyses the reaction N(6)-carboxybiotinyl-L-lysyl-[protein] + acetyl-CoA = N(6)-biotinyl-L-lysyl-[protein] + malonyl-CoA. It functions in the pathway lipid metabolism; malonyl-CoA biosynthesis; malonyl-CoA from acetyl-CoA: step 1/1. Functionally, component of the acetyl coenzyme A carboxylase (ACC) complex. First, biotin carboxylase catalyzes the carboxylation of biotin on its carrier protein (BCCP) and then the CO(2) group is transferred by the carboxyltransferase to acetyl-CoA to form malonyl-CoA. The protein is Acetyl-coenzyme A carboxylase carboxyl transferase subunit alpha of Flavobacterium johnsoniae (strain ATCC 17061 / DSM 2064 / JCM 8514 / BCRC 14874 / CCUG 350202 / NBRC 14942 / NCIMB 11054 / UW101) (Cytophaga johnsonae).